A 595-amino-acid polypeptide reads, in one-letter code: DNA primase (595 aa).

A CHC2-type zinc finger spans residues 38-62 (CPFHQEKTPSFTVSDSKRFFYCFGC). The Toprim domain occupies 250-332 (NHSILVEGYF…EKKISFIRLP (83 aa)). Residues glutamate 256, aspartate 300, and aspartate 302 each contribute to the Mg(2+) site.

The protein belongs to the DnaG primase family. Monomer. Interacts with DnaB. Zn(2+) serves as cofactor. It depends on Mg(2+) as a cofactor.

The catalysed reaction is ssDNA + n NTP = ssDNA/pppN(pN)n-1 hybrid + (n-1) diphosphate.. Functionally, RNA polymerase that catalyzes the synthesis of short RNA molecules used as primers for DNA polymerase during DNA replication. In Rickettsia felis (strain ATCC VR-1525 / URRWXCal2) (Rickettsia azadi), this protein is DNA primase.